The sequence spans 282 residues: Homeobox protein pv.1 (282 aa).

Composition is skewed to basic and acidic residues over residues 17 to 26 (EEAADGKDSM) and 44 to 59 (YAKE…DVQE). Residues 17-128 (EEAADGKDSM…HRGESPKSDL (112 aa)) form a disordered region. 2 stretches are compositionally biased toward polar residues: residues 86 to 96 (WGSSDDFSSVG) and 103 to 114 (EGSPSPMRNSQE). Residues 116–128 (ETDHRGESPKSDL) show a composition bias toward basic and acidic residues. A DNA-binding region (homeobox) is located at residues 129–188 (QRHLRTAFTPQQISKLEQAFNKQRYLGASERKKLATSLRLSEIQVKTWFQNRRMKLKRQI).

Expressed in the ventral marginal zone of blastulae. At early gastrulation, expression begins to spread to the animal pole (ectoderm), and at stage 11.5 is expressed in a gradient across the animal cap, with levels highest in the ventral region. At the end of gastrulation, predominantly localized to the ventral and lateral regions of the closing slit blastopore. Also expressed at a low level in ventral endoderm.

It localises to the nucleus. Transcriptional repressor. Acts in a ventral signaling pathway downstream of bmp4, which suppresses dorsal mesoderm formation and leads to both ventral mesoderm and ventral ectoderm formation. Acts in the ectoderm to simultaneously specify epidermal lineages and restrict neuralization. Represses transcription of dorsal-specific genes. Binds to DNA, with preference for the target sequences 5'-TAATGC-3' and 5'-TAATTG-3'. Acts in a pathway downstream of bmp4 and fgf to negatively regulate erythroid specification. The polypeptide is Homeobox protein pv.1 (Xenopus laevis (African clawed frog)).